Here is a 560-residue protein sequence, read N- to C-terminus: Dihydroxy-acid dehydratase (560 aa).

Residue Cys-50 coordinates [2Fe-2S] cluster. Asp-82 provides a ligand contact to Mg(2+). Position 123 (Cys-123) interacts with [2Fe-2S] cluster. Mg(2+) is bound by residues Asp-124 and Lys-125. Lys-125 carries the N6-carboxylysine modification. Residue Cys-195 participates in [2Fe-2S] cluster binding. Glu-446 contacts Mg(2+). Residue Ser-472 is the Proton acceptor of the active site.

This sequence belongs to the IlvD/Edd family. In terms of assembly, homodimer. The cofactor is [2Fe-2S] cluster. Mg(2+) serves as cofactor.

It catalyses the reaction (2R)-2,3-dihydroxy-3-methylbutanoate = 3-methyl-2-oxobutanoate + H2O. It carries out the reaction (2R,3R)-2,3-dihydroxy-3-methylpentanoate = (S)-3-methyl-2-oxopentanoate + H2O. It participates in amino-acid biosynthesis; L-isoleucine biosynthesis; L-isoleucine from 2-oxobutanoate: step 3/4. Its pathway is amino-acid biosynthesis; L-valine biosynthesis; L-valine from pyruvate: step 3/4. Functions in the biosynthesis of branched-chain amino acids. Catalyzes the dehydration of (2R,3R)-2,3-dihydroxy-3-methylpentanoate (2,3-dihydroxy-3-methylvalerate) into 2-oxo-3-methylpentanoate (2-oxo-3-methylvalerate) and of (2R)-2,3-dihydroxy-3-methylbutanoate (2,3-dihydroxyisovalerate) into 2-oxo-3-methylbutanoate (2-oxoisovalerate), the penultimate precursor to L-isoleucine and L-valine, respectively. This is Dihydroxy-acid dehydratase from Leptothrix cholodnii (strain ATCC 51168 / LMG 8142 / SP-6) (Leptothrix discophora (strain SP-6)).